Consider the following 984-residue polypeptide: Respiratory nitrate reductase subunit alpha (984 aa).

The tract at residues 1–43 is disordered; sequence MSRNDASQLDDGETTAESPPDDQANDAPEVGDPPGDPVDADSG. Positions 8–24 are enriched in acidic residues; that stretch reads QLDDGETTAESPPDDQA. In terms of domain architecture, 4Fe-4S Mo/W bis-MGD-type spans 103–167; sequence DSVSRSTHSV…CYTDYVNADQ (65 aa). Positions 110, 114, 118, and 153 each coordinate [4Fe-4S] cluster. D249 serves as a coordination point for Mo-bis(molybdopterin guanine dinucleotide).

This sequence belongs to the prokaryotic molybdopterin-containing oxidoreductase family. Probable multiprotein complex; a catalytic heterodimer of an alpha and beta chain is proposed to associate with additional subunits involved in membrane attachment and electron transfer. Requires [4Fe-4S] cluster as cofactor. The cofactor is Mo-bis(molybdopterin guanine dinucleotide). Post-translationally, exported by the Tat system.

The protein localises to the cell membrane. It carries out the reaction nitrate + a quinol = a quinone + nitrite + H2O. Its activity is regulated as follows. Inhibited by cyanide, azide and antimycin A. Enzyme stability is not dependent on salt concentration. The respiratory membrane-bound nitrate reductase enzyme complex plays a role in generation of metabolic energy by using nitrate as a terminal electron acceptor during anaerobic conditions. The alpha chain is the actual site of nitrate reduction. This is Respiratory nitrate reductase subunit alpha (narG) from Haloferax mediterranei (strain ATCC 33500 / DSM 1411 / JCM 8866 / NBRC 14739 / NCIMB 2177 / R-4) (Halobacterium mediterranei).